Here is a 61-residue protein sequence, read N- to C-terminus: Small ribosomal subunit protein uS14 (61 aa).

Zn(2+) is bound by residues Cys24, Cys27, Cys40, and Cys43.

This sequence belongs to the universal ribosomal protein uS14 family. Zinc-binding uS14 subfamily. As to quaternary structure, part of the 30S ribosomal subunit. Contacts proteins S3 and S10. It depends on Zn(2+) as a cofactor.

Binds 16S rRNA, required for the assembly of 30S particles and may also be responsible for determining the conformation of the 16S rRNA at the A site. This Roseiflexus castenholzii (strain DSM 13941 / HLO8) protein is Small ribosomal subunit protein uS14.